We begin with the raw amino-acid sequence, 699 residues long: Receptor-type tyrosine-protein phosphatase epsilon (699 aa).

The signal sequence occupies residues 1–22 (MEPFCPLLLASFSLSLATAGQG). Residues 20–36 (GQGNDTTPTESNWTSTT) show a composition bias toward low complexity. The tract at residues 20-41 (GQGNDTTPTESNWTSTTAGPPD) is disordered. N-linked (GlcNAc...) asparagine glycosylation is found at Asn23 and Asn31. The Extracellular portion of the chain corresponds to 23–47 (NDTTPTESNWTSTTAGPPDPGTSQP). A helical membrane pass occupies residues 48–68 (LLTWLLLPLLLLLFLLAAYFF). At 69 to 699 (RFRKQRKAVV…DIFSDYANFK (631 aa)) the chain is on the cytoplasmic side. 2 Tyrosine-protein phosphatase domains span residues 134–393 (FREE…LLEY) and 425–688 (LEEE…VQDF). Residues Asp302, 334-340 (CSAGVGR), and Gln378 each bind substrate. Cys334 (phosphocysteine intermediate) is an active-site residue. The Phosphocysteine intermediate role is filled by Cys629. Tyr695 carries the post-translational modification Phosphotyrosine.

This sequence belongs to the protein-tyrosine phosphatase family. Receptor class 4 subfamily. Monomer. Isoform 2: Homodimer. Can form oligomers. Dimerization is increased by oxidative stress and decreased by EGFR. Isoform 2 interacts with GRB2. Post-translationally, a catalytically active cytoplasmic form (p65) is produced by proteolytic cleavage of either isoform 1, isoform 2 or isoform 3. In terms of processing, isoform 1 and isoform 2 are phosphorylated on tyrosine residues by tyrosine kinase Neu. N-glycosylated. In terms of tissue distribution, isoform 1 is highly expressed in the brain, lung, spleen and testis. Isoform 2 is highly expressed in thymus, spleen and lung. Isoform 1 and isoform 2 are expressed in primary hepatocytes.

The protein localises to the cell membrane. It localises to the cytoplasm. The enzyme catalyses O-phospho-L-tyrosyl-[protein] + H2O = L-tyrosyl-[protein] + phosphate. Isoform 1 plays a critical role in signaling transduction pathways and phosphoprotein network topology in red blood cells. May play a role in osteoclast formation and function. Acts as a negative regulator of insulin receptor (IR) signaling and is involved in insulin-induced glucose metabolism mainly through direct dephosphorylation and inactivation of IR in hepatocytes and liver. In terms of biological role, isoform 2 acts as a negative regulator of insulin receptor (IR) signaling in skeletal muscle. Regulates insulin-induced tyrosine phosphorylation of insulin receptor (IR) and insulin receptor substrate 1 (IRS-1), phosphorylation of protein kinase B and glycogen synthase kinase-3 and insulin induced stimulation of glucose uptake. Functionally, isoform 1 and isoform 2 act as a negative regulator of FceRI-mediated signal transduction leading to cytokine production and degranulation, most likely by acting at the level of SYK to affect downstream events such as phosphorylation of SLP76 and LAT and mobilization of Ca(2+). This chain is Receptor-type tyrosine-protein phosphatase epsilon (Ptpre), found in Rattus norvegicus (Rat).